Here is a 352-residue protein sequence, read N- to C-terminus: Phosphoribosylformylglycinamidine cyclo-ligase (352 aa).

This sequence belongs to the AIR synthase family.

Its subcellular location is the cytoplasm. The enzyme catalyses 2-formamido-N(1)-(5-O-phospho-beta-D-ribosyl)acetamidine + ATP = 5-amino-1-(5-phospho-beta-D-ribosyl)imidazole + ADP + phosphate + H(+). It participates in purine metabolism; IMP biosynthesis via de novo pathway; 5-amino-1-(5-phospho-D-ribosyl)imidazole from N(2)-formyl-N(1)-(5-phospho-D-ribosyl)glycinamide: step 2/2. In Stenotrophomonas maltophilia (strain K279a), this protein is Phosphoribosylformylglycinamidine cyclo-ligase.